The following is a 196-amino-acid chain: Zinc finger C2H2 protein ECU03_0940 (196 aa).

2 consecutive C2H2-type zinc fingers follow at residues 130–155 and 166–191; these read YACE…KEGH and YVCP…KHYH.

This Encephalitozoon cuniculi (strain GB-M1) (Microsporidian parasite) protein is Zinc finger C2H2 protein ECU03_0940.